The primary structure comprises 672 residues: Glycerophosphocholine phosphodiesterase GPCPD1 (672 aa).

One can recognise a CBM20 domain in the interval methionine 1–isoleucine 113. Substrate contacts are provided by residues arginine 68 and histidine 86–lysine 87. At serine 175 the chain carries Phosphoserine. The 301-residue stretch at proline 318–glutamine 618 folds into the GP-PDE domain. Tyrosine 608 carries the post-translational modification Phosphotyrosine.

This sequence belongs to the glycerophosphoryl diester phosphodiesterase family.

The protein resides in the cytoplasm. Its subcellular location is the cytosol. The enzyme catalyses sn-glycerol 3-phosphocholine + H2O = sn-glycerol 3-phosphate + choline + H(+). In terms of biological role, may be involved in the negative regulation of skeletal muscle differentiation, independently of its glycerophosphocholine phosphodiesterase activity. This is Glycerophosphocholine phosphodiesterase GPCPD1 (Gpcpd1) from Rattus norvegicus (Rat).